Reading from the N-terminus, the 856-residue chain is Facilitated trehalose transporter Tret1 (856 aa).

2 disordered regions span residues 1-29 and 62-202; these read MSGRDNRGAGGGGGGHQPLSNAMGKLKEK and DPFL…KATS. The Cytoplasmic portion of the chain corresponds to 1 to 389; it reads MSGRDNRGAG…LEVYRPTTNP (389 aa). A compositionally biased stretch (polar residues) spans 69–80; the sequence is VSPQRHPQTVRT. The segment covering 133-142 has biased composition (basic and acidic residues); the sequence is EIREHRDRQQ. Residues 170-180 are compositionally biased toward polar residues; it reads GNSNTNSNKAA. S247, S248, S249, S319, and S321 each carry phosphoserine. Residues 326–345 form a disordered region; that stretch reads LTSRQHFQQQRSISTDSRKS. The segment covering 329–340 has biased composition (polar residues); the sequence is RQHFQQQRSIST. The helical transmembrane segment at 390–410 threads the bilayer; that stretch reads IFIWTQVIAALSVSLGSLVVG. Topologically, residues 411-439 are extracellular; it reads FVSAYTSPALVSMSDPNITSFTVTKDAGS. An N-linked (GlcNAc...) asparagine glycan is attached at N427. A helical transmembrane segment spans residues 440-460; it reads WVGGIMPLAGLVGGVAGGPLI. Residues 461-472 lie on the Cytoplasmic side of the membrane; that stretch reads EYMGRRNTILAT. A helical membrane pass occupies residues 473 to 493; the sequence is AVPFIVSSLLIACAVNVAMVL. Over 494–496 the chain is Extracellular; sequence CGR. A helical transmembrane segment spans residues 497-517; it reads FLAGFCVGIASLSLPVYLGET. At 518–527 the chain is on the cytoplasmic side; that stretch reads VQPEVRGTLG. The chain crosses the membrane as a helical span at residues 528–548; the sequence is LLPTAFGNIGILVCFVAGSFM. N-linked (GlcNAc...) asparagine glycosylation is present at N549. The Extracellular segment spans residues 549 to 551; that stretch reads NWS. The helical transmembrane segment at 552 to 572 threads the bilayer; sequence MLAFLGAALPVPFLILMFLIP. Residues 573-635 lie on the Cytoplasmic side of the membrane; the sequence is ETPRWYVSRG…ELLKRNNLKP (63 aa). Residues 636 to 656 traverse the membrane as a helical segment; it reads LSISLGLMFFQQFSGINAVIF. At 657–672 the chain is on the extracellular side; sequence YTVQIFKDAGSTIDGN. A helical membrane pass occupies residues 673–693; the sequence is VCTIIVGVVNFVATFIGILLI. Residues 694 to 699 are Cytoplasmic-facing; the sequence is DRAGRK. A helical transmembrane segment spans residues 700 to 720; it reads ILLYASDIAMVLTLFVLGGFF. The Extracellular segment spans residues 721 to 739; sequence YCKAHGPDVSHLGWLPLTC. Residues 740–760 form a helical membrane-spanning segment; sequence FVVYILGFSVGFGPIPWLMMG. Topologically, residues 761–766 are cytoplasmic; it reads EILPAK. A helical membrane pass occupies residues 767 to 787; sequence IRGAAASVATSFNWTCTFVVT. Over 788-800 the chain is Extracellular; it reads KTFQDLVGSLGAH. The helical transmembrane segment at 801-821 threads the bilayer; the sequence is GAFWLFGAICFVGLFFVILYV. Over 822-856 the chain is Cytoplasmic; it reads PETQGKTLEDIERKMMGRVRRMSSVANIKPLSFNM. S844 and S845 each carry phosphoserine.

This sequence belongs to the major facilitator superfamily. Sugar transporter (TC 2.A.1.1) family. Trehalose transporter subfamily.

The protein localises to the cell membrane. Its function is as follows. Low-capacity facilitative transporter for trehalose. Does not transport maltose, sucrose or lactose. Mediates the bidirectional transfer of trehalose. Responsible for the transport of trehalose synthesized in the fat body and the incorporation of trehalose into other tissues that require a carbon source, thereby regulating trehalose levels in the hemolymph. This is Facilitated trehalose transporter Tret1 from Drosophila yakuba (Fruit fly).